A 34-amino-acid chain; its full sequence is Kappa-theraphotoxin-Sc1a (34 aa).

3 disulfides stabilise this stretch: C2–C16, C9–C21, and C15–C28. Residue I34 is modified to Isoleucine amide.

Belongs to the neurotoxin 10 (Hwtx-1) family. 57 (ScTx1) subfamily. In terms of tissue distribution, expressed by the venom gland.

The protein localises to the secreted. Acts as a gating-modifier to inhibit voltage-gated potassium channels. It inhibits delayed Kv2.1/KCNB1 (IC(50) is 12.7 nM), Kv2.1/Kv9.3 (IC(50) is 7.2 nM) (KCNB1/KCNS3), Kv2.2/KCNB2 (IC(50) is 21.4 nM), and transient Kv4.2/KCND2 (IC(50) is 1.2 nM) channels. In Stromatopelma calceatum (Featherleg baboon tarantula), this protein is Kappa-theraphotoxin-Sc1a.